The chain runs to 411 residues: Probable indole-3-pyruvate monooxygenase YUCCA4 (411 aa).

21–26 (GAGPSG) serves as a coordination point for FAD. 183–188 (GCGNSG) is a binding site for NADP(+).

The protein belongs to the FMO family. Requires FAD as cofactor. In terms of tissue distribution, expressed in leaves, stems, flowers, buds and siliques. Detected in the apical gynoecium and in the developing ovules.

The protein localises to the cytoplasm. Its subcellular location is the endoplasmic reticulum membrane. It catalyses the reaction indole-3-pyruvate + NADPH + O2 + H(+) = (indol-3-yl)acetate + CO2 + NADP(+) + H2O. It participates in plant hormone metabolism; auxin biosynthesis. Functionally, involved in auxin biosynthesis. Both isoforms are catalitically active. Involved during embryogenesis and seedling development. Required for the formation of floral organs and vascular tissues. Belongs to the set of redundant YUCCA genes probably responsible for auxin biosynthesis in shoots. This chain is Probable indole-3-pyruvate monooxygenase YUCCA4 (YUC4), found in Arabidopsis thaliana (Mouse-ear cress).